The following is a 478-amino-acid chain: Proline--tRNA ligase (478 aa).

It belongs to the class-II aminoacyl-tRNA synthetase family. ProS type 3 subfamily. Homodimer.

It is found in the cytoplasm. The enzyme catalyses tRNA(Pro) + L-proline + ATP = L-prolyl-tRNA(Pro) + AMP + diphosphate. Its function is as follows. Catalyzes the attachment of proline to tRNA(Pro) in a two-step reaction: proline is first activated by ATP to form Pro-AMP and then transferred to the acceptor end of tRNA(Pro). The chain is Proline--tRNA ligase from Clostridium novyi (strain NT).